The sequence spans 185 residues: Monooxygenase hypC (185 aa).

3 consecutive transmembrane segments (helical) span residues T35–L55, G75–Y95, and P106–A126. An N-linked (GlcNAc...) asparagine glycan is attached at N129. The chain crosses the membrane as a helical span at residues A165 to F185.

Belongs to the anthrone oxygenase family.

It is found in the membrane. It functions in the pathway mycotoxin biosynthesis. In terms of biological role, monooxygenase; part of the fragmented gene cluster that mediates the biosynthesis of dothistromin (DOTH), a polyketide toxin very similar in structure to the aflatoxin precursor, versicolorin B. The first step of the pathway is the conversion of acetate to norsolorinic acid (NOR) and requires the fatty acid synthase subunits hexA and hexB, as well as the polyketide synthase pksA. PksA combines a hexanoyl starter unit and 7 malonyl-CoA extender units to synthesize the precursor NOR. The hexanoyl starter unit is provided to the acyl-carrier protein (ACP) domain by the fungal fatty acid synthase hexA/hexB. The second step is the conversion of NOR to averantin (AVN) and requires the norsolorinic acid ketoreductase nor1, which catalyzes the dehydration of norsolorinic acid to form (1'S)-averantin. The cytochrome P450 monooxygenase avnA then catalyzes the hydroxylation of AVN to 5'hydroxyaverantin (HAVN). The next step is performed by adhA that transforms HAVN to averufin (AVF). Averufin might then be converted to hydroxyversicolorone by cypX and avfA. Hydroxyversicolorone is further converted versiconal hemiacetal acetate (VHA) by moxY. VHA is then the substrate for the versiconal hemiacetal acetate esterase est1 to yield versiconal (VAL). Versicolorin B synthase vbsA then converts VAL to versicolorin B (VERB) by closing the bisfuran ring. Then, the activity of the versicolorin B desaturase verB leads to versicolorin A (VERA). DotB, a predicted chloroperoxidase, may perform epoxidation of the A-ring of VERA. Alternatively, a cytochrome P450, such as cypX or avnA could catalyze this step. It is also possible that another, uncharacterized, cytochrome P450 enzyme is responsible for this step. Opening of the epoxide could potentially be achieved by the epoxide hydrolase epoA. However, epoA seems not to be required for DOTH biosynthesis, but other epoxide hydrolases may have the ability to complement this hydrolysis. Alternatively, opening of the epoxide ring could be achieved non-enzymatically. The next step is the deoxygenation of ring A to yield the 5,8-dihydroxyanthraquinone which is most likely catalyzed by the NADPH dehydrogenase encoded by ver1. The last stages of DOTH biosynthesis are proposed to involve hydroxylation of the bisfuran. OrdB and norB might have oxidative roles here. An alternative possibility is that cytochrome P450 monoogenases such as avnA and cypX might perform these steps in addition to previously proposed steps. The chain is Monooxygenase hypC from Dothistroma septosporum (strain NZE10 / CBS 128990) (Red band needle blight fungus).